The sequence spans 502 residues: ATP synthase subunit alpha (502 aa).

Glycine 169–threonine 176 is an ATP binding site.

This sequence belongs to the ATPase alpha/beta chains family. In terms of assembly, F-type ATPases have 2 components, CF(1) - the catalytic core - and CF(0) - the membrane proton channel. CF(1) has five subunits: alpha(3), beta(3), gamma(1), delta(1), epsilon(1). CF(0) has three main subunits: a(1), b(2) and c(9-12). The alpha and beta chains form an alternating ring which encloses part of the gamma chain. CF(1) is attached to CF(0) by a central stalk formed by the gamma and epsilon chains, while a peripheral stalk is formed by the delta and b chains.

The protein localises to the cell membrane. It catalyses the reaction ATP + H2O + 4 H(+)(in) = ADP + phosphate + 5 H(+)(out). Its function is as follows. Produces ATP from ADP in the presence of a proton gradient across the membrane. The alpha chain is a regulatory subunit. This chain is ATP synthase subunit alpha, found in Desulfitobacterium hafniense (strain DSM 10664 / DCB-2).